We begin with the raw amino-acid sequence, 149 residues long: MHCPFCSATDTKVIDSRLVADGHQVRRRRECVQCHERYTTFEGAELVMPRVVKQDGSRQPFDEEKLRGGMLRAVEKRPVSMDQIEQSLTKIKSTLRATGEREVKSEMIGNLMMDQLVNLDKVAYIRFASVYRAFEDVSEFGEAIANLQK.

The segment at 3 to 34 (CPFCSATDTKVIDSRLVADGHQVRRRRECVQC) is a zinc-finger region. An ATP-cone domain is found at 49–139 (PRVVKQDGSR…VYRAFEDVSE (91 aa)).

Belongs to the NrdR family. Requires Zn(2+) as cofactor.

Functionally, negatively regulates transcription of bacterial ribonucleotide reductase nrd genes and operons by binding to NrdR-boxes. The protein is Transcriptional repressor NrdR of Shewanella piezotolerans (strain WP3 / JCM 13877).